A 780-amino-acid chain; its full sequence is Cullin-5 (780 aa).

S34 carries the post-translational modification Phosphoserine. T210 carries the phosphothreonine modification. The region spanning 711–772 (RILRTQEAII…HKYIRRDEAD (62 aa)) is the Cullin neddylation domain. K724 participates in a covalent cross-link: Glycyl lysine isopeptide (Lys-Gly) (interchain with G-Cter in NEDD8).

The protein belongs to the cullin family. Component of multiple cullin-5-RING E3 ubiquitin-protein ligase complexes (ECS complexes, also named CRL5 complexes) formed of CUL5, Elongin BC (ELOB and ELOC), RNF7/RBX2 and a variable SOCS box domain-containing protein as substrate-specific recognition component. CUL5-containing ECS complexes specifically contain RNF7/RBX2, and not RBX1, as catalytic subunit. Component of the ECS(ASB2) complex with the substrate recognition component ASB2. Component of the ECS(ASB6) complex with the substrate recognition component ASB6. Component of the ECS(ASB7) complex with the substrate recognition component ASB7. Component of the ECS(ASB9) complex with the substrate recognition component ASB9. Component of the ECS(ASB11) complex with the substrate recognition component ASB11. Component of the ECS(ASB12) complex with the substrate recognition component ASB12. Component of the ECS(LRRC41) complex with the substrate recognition component LRRC41. Component of the ECS(SOCS1) complex with the substrate recognition component SOCS1. Component of the ECS(SOCS2) complex with the substrate recognition component SOCS2. Component of the ECS(WSB1) complex with the substrate recognition subunit WSB1. Component of the ECS(SOCS3) complex with the substrate recognition component SOCS3. Component of the ECS(SOCS7) complex with the substrate recognition component SOCS7. Component of the ECS(SPSB1) complex with the substrate recognition component SPSB1. Component of the ECS(SPSB3) complex with the substrate recognition component SPSB3. Component of the ECS(SPSB2) complex with the substrate recognition component SPSB2. Component of the ECS(SPSB4) complex with the substrate recognition component SPSB4. Component of the ECS(RAB40) complex with the substrate recognition subunit RAB40A, RAB40B or RAB40C. Component of the ECS(KLHDC1) complex with the substrate recognition component KLHDC1. Component of the ECS(PCMTD1) complex with the substrate recognition subunit PCMTD1. May also form complexes containing RBX1 and ELOA or VHL; additional evidence is however required to confirm this result in vivo. Interacts (when neddylated) with ARIH2; leading to activate the E3 ligase activity of ARIH2. Interacts with ERCC6; the interaction is induced by DNA damaging agents or inhibitors of RNA polymerase II elongation. Interacts with ELOA (via the BC-box). Interacts (unneddylated form) with DCUN1D1, DCUN1D2, DCUN1D3, DCUN1D4 and DCUN1D5; these interactions promote the cullin neddylation. In terms of processing, neddylated; which enhances the ubiquitination activity of ECS complexes and prevents binding of the inhibitor CAND1. Deneddylated via its interaction with the COP9 signalosome (CSN).

It is found in the nucleus. It functions in the pathway protein modification; protein ubiquitination. Functionally, core component of multiple cullin-5-RING E3 ubiquitin-protein ligase complexes (ECS complexes, also named CRL5 complexes), which mediate the ubiquitination and subsequent proteasomal degradation of target proteins. Acts a scaffold protein that contributes to catalysis through positioning of the substrate and the ubiquitin-conjugating enzyme. The functional specificity of the E3 ubiquitin-protein ligase complex depends on the variable SOCS box-containing substrate recognition component. Acts as a key regulator of neuron positioning during cortex development: component of various SOCS-containing ECS complexes, such as the ECS(SOCS7) complex, that regulate reelin signaling by mediating ubiquitination and degradation of DAB1. ECS(SOCS1) seems to direct ubiquitination of JAK2. The ECS(SOCS2) complex mediates the ubiquitination and subsequent proteasomal degradation of phosphorylated EPOR and GHR. The ECS(SPSB3) complex catalyzes ubiquitination of nuclear CGAS. ECS(KLHDC1) complex is part of the DesCEND (destruction via C-end degrons) pathway and mediates ubiquitination and degradation of truncated SELENOS selenoprotein produced by failed UGA/Sec decoding, which ends with a glycine. The ECS(ASB9) complex mediates ubiquitination and degradation of CKB. As part of some ECS complex, promotes 'Lys-11'-linked ubiquitination and degradation of BTRC. As part of a multisubunit ECS complex, polyubiquitinates monoubiquitinated POLR2A. As part of the ECS(RAB40C) complex, mediates ANKRD28 ubiquitination and degradation, thereby regulating protein phosphatase 6 (PP6) complex activity and focal adhesion assembly during cell migration. As part of the ECS(RAB40A) complex, mediates RHOU 'Lys-48'-linked ubiquitination and degradation, thus inhibiting focal adhesion disassembly during cell migration. As part of the ECS(RAB40B) complex, mediates LIMA1/EPLIN and RAP2 ubiquitination, thereby regulating actin cytoskeleton dynamics and stress fiber formation during cell migration. May form a cell surface vasopressin receptor. This Rattus norvegicus (Rat) protein is Cullin-5.